Here is a 69-residue protein sequence, read N- to C-terminus: DNA gyrase inhibitor YacG (69 aa).

Residues C7, C10, C26, and C30 each contribute to the Zn(2+) site.

The protein belongs to the DNA gyrase inhibitor YacG family. In terms of assembly, interacts with GyrB. It depends on Zn(2+) as a cofactor.

In terms of biological role, inhibits all the catalytic activities of DNA gyrase by preventing its interaction with DNA. Acts by binding directly to the C-terminal domain of GyrB, which probably disrupts DNA binding by the gyrase. This is DNA gyrase inhibitor YacG from Shewanella putrefaciens (strain CN-32 / ATCC BAA-453).